The chain runs to 232 residues: Flagellar L-ring protein (232 aa).

Positions 1 to 15 (MKKVLFYVLPFAFFG) are cleaved as a signal peptide. A lipid anchor (N-palmitoyl cysteine) is attached at Cys16. Residue Cys16 is the site of S-diacylglycerol cysteine attachment.

Belongs to the FlgH family. The basal body constitutes a major portion of the flagellar organelle and consists of four rings (L,P,S, and M) mounted on a central rod.

It is found in the cell outer membrane. The protein resides in the bacterial flagellum basal body. Its function is as follows. Assembles around the rod to form the L-ring and probably protects the motor/basal body from shearing forces during rotation. The chain is Flagellar L-ring protein from Campylobacter jejuni subsp. jejuni serotype O:6 (strain 81116 / NCTC 11828).